Consider the following 96-residue polypeptide: Aspartyl/glutamyl-tRNA(Asn/Gln) amidotransferase subunit C (96 aa).

It belongs to the GatC family. As to quaternary structure, heterotrimer of A, B and C subunits.

The catalysed reaction is L-glutamyl-tRNA(Gln) + L-glutamine + ATP + H2O = L-glutaminyl-tRNA(Gln) + L-glutamate + ADP + phosphate + H(+). The enzyme catalyses L-aspartyl-tRNA(Asn) + L-glutamine + ATP + H2O = L-asparaginyl-tRNA(Asn) + L-glutamate + ADP + phosphate + 2 H(+). Its function is as follows. Allows the formation of correctly charged Asn-tRNA(Asn) or Gln-tRNA(Gln) through the transamidation of misacylated Asp-tRNA(Asn) or Glu-tRNA(Gln) in organisms which lack either or both of asparaginyl-tRNA or glutaminyl-tRNA synthetases. The reaction takes place in the presence of glutamine and ATP through an activated phospho-Asp-tRNA(Asn) or phospho-Glu-tRNA(Gln). The polypeptide is Aspartyl/glutamyl-tRNA(Asn/Gln) amidotransferase subunit C (Aliarcobacter butzleri (strain RM4018) (Arcobacter butzleri)).